The following is a 394-amino-acid chain: 1-deoxy-D-xylulose 5-phosphate reductoisomerase (394 aa).

Residues Thr-12, Gly-13, Ser-14, Ile-15, Lys-39, Gln-40, and Asn-126 each coordinate NADPH. Residue Lys-127 participates in 1-deoxy-D-xylulose 5-phosphate binding. Position 128 (Glu-128) interacts with NADPH. Asp-152 contributes to the Mn(2+) binding site. The 1-deoxy-D-xylulose 5-phosphate site is built by Ser-153, Glu-154, Ser-183, and His-206. Glu-154 contributes to the Mn(2+) binding site. Gly-212 is a binding site for NADPH. Residues Ser-219, Asn-224, Lys-225, and Glu-228 each coordinate 1-deoxy-D-xylulose 5-phosphate. Glu-228 contacts Mn(2+).

This sequence belongs to the DXR family. Mg(2+) is required as a cofactor. It depends on Mn(2+) as a cofactor.

The catalysed reaction is 2-C-methyl-D-erythritol 4-phosphate + NADP(+) = 1-deoxy-D-xylulose 5-phosphate + NADPH + H(+). Its pathway is isoprenoid biosynthesis; isopentenyl diphosphate biosynthesis via DXP pathway; isopentenyl diphosphate from 1-deoxy-D-xylulose 5-phosphate: step 1/6. Catalyzes the NADPH-dependent rearrangement and reduction of 1-deoxy-D-xylulose-5-phosphate (DXP) to 2-C-methyl-D-erythritol 4-phosphate (MEP). This chain is 1-deoxy-D-xylulose 5-phosphate reductoisomerase, found in Neisseria meningitidis serogroup A / serotype 4A (strain DSM 15465 / Z2491).